The primary structure comprises 73 residues: Omega-conotoxin GVIA (73 aa).

A signal peptide spans 1 to 22; sequence MKLTCVVIVAVLLLTACQLITA. A propeptide spanning residues 23 to 45 is cleaved from the precursor; the sequence is DDSRGTQKHRALGSTTELSLSTR. Disulfide bonds link Cys46–Cys61, Cys53–Cys64, and Cys60–Cys71. 4-hydroxyproline occurs at positions 49, 55, and 66. Position 72 is a tyrosine amide; in form omega-conotoxin GVIA (Tyr72).

This sequence belongs to the conotoxin O1 superfamily. As to expression, expressed by the venom duct.

It localises to the secreted. Omega-conotoxins act at presynaptic membranes, they bind and block voltage-gated calcium channels (Cav). This toxin blocks N-type calcium channels (Cav2.2/CACNA1B) with a high potency (it displaces [125I]GVIA with an IC(50)=3.7-38 pM). The polypeptide is Omega-conotoxin GVIA (Conus geographus (Geography cone)).